The primary structure comprises 437 residues: MASPSSFTYCCPPSSSPIWSEPLYSLRPEHARERLQDDSVETVTSIEQAKVEEKIQEVFSSYKFNHLVPRLVLQREKHFHYLKRGLRQLTDAYECLDASRPWLCYWILHSLELLDEPIPQMVATDVCQFLELCQSPEGGFGGGPGQYPHLAPTYAAVNALCIIGTEEAYDVINREKLLQYLYSLKQPDGSFLMHDGGEVDVRSAYCAASVASLTNIITPDLFEGTAEWIARCQNWEGGIGGVPGMEAHGGYTFCGLAALVILKKERSLNLKSLLQWVTSRQMRFEGGFQGRCNKLVDGCYSFWQAGLLPLLHRALHAQGDPALSMSRWMFHQQALQEYILMCCQCPTGGLLDKPGKSRDFYHTCYCLSGLSIAQHFGSGAMLHDVVLGVPENALQPTHPVYNIGPDKVIQATMHFLQKPVPGFEEHEDEASAEPATD.

PFTB repeat units lie at residues 123–164 (ATDV…CIIG), 174–215 (REKL…SLTN), 222–263 (FEGT…VILK), 270–312 (LKSL…PLLH), and 332–374 (QQAL…SIAQ). Residues 248-251 (HGGY) and 291-294 (RCNK) each bind (2E,6E)-farnesyl diphosphate. Positions 297 and 299 each coordinate Zn(2+). 300-303 (YSFW) is a binding site for (2E,6E)-farnesyl diphosphate. His362 serves as a coordination point for Zn(2+). Thr436 carries the phosphothreonine modification.

This sequence belongs to the protein prenyltransferase subunit beta family. In terms of assembly, heterodimer of FNTA and FNTB. Zn(2+) is required as a cofactor.

The catalysed reaction is L-cysteinyl-[protein] + (2E,6E)-farnesyl diphosphate = S-(2E,6E)-farnesyl-L-cysteinyl-[protein] + diphosphate. Its function is as follows. Essential subunit of the farnesyltransferase complex. Catalyzes the transfer of a farnesyl moiety from farnesyl diphosphate to a cysteine at the fourth position from the C-terminus of several proteins having the C-terminal sequence Cys-aliphatic-aliphatic-X. This chain is Protein farnesyltransferase subunit beta (FNTB), found in Bos taurus (Bovine).